Here is a 223-residue protein sequence, read N- to C-terminus: Ribose-5-phosphate isomerase A (223 aa).

Residues 28 to 31 (TGST), 81 to 84 (DGTD), and 94 to 97 (KGGG) each bind substrate. Glutamate 103 (proton acceptor) is an active-site residue. Position 121 (lysine 121) interacts with substrate.

The protein belongs to the ribose 5-phosphate isomerase family. As to quaternary structure, homodimer.

The catalysed reaction is aldehydo-D-ribose 5-phosphate = D-ribulose 5-phosphate. It participates in carbohydrate degradation; pentose phosphate pathway; D-ribose 5-phosphate from D-ribulose 5-phosphate (non-oxidative stage): step 1/1. Its function is as follows. Catalyzes the reversible conversion of ribose-5-phosphate to ribulose 5-phosphate. The polypeptide is Ribose-5-phosphate isomerase A (Baumannia cicadellinicola subsp. Homalodisca coagulata).